A 271-amino-acid chain; its full sequence is GATA transcription factor 19 (271 aa).

The segment at 1 to 23 (MAAEPPADGRDPPADDGAAGDGA) is disordered. Positions 33–68 (LSAASEQLTLVYQGEVYVFDPVPPQKVQAVLLVLGG) constitute a Tify domain. A CCT domain is found at 95-137 (RVASLMRFREKRKERCFDKKIRYSVRKEVAQKMKRRKGQFAGR). The GATA-type zinc finger occupies 166–193 (CQNCGISSRLTPAMRRGPAGPRSLCNAC). The disordered stretch occupies residues 238–271 (NQTTMKTDTEMVPEQEQKADVLPPTKEEDSMATS). Basic and acidic residues predominate over residues 252–271 (QEQKADVLPPTKEEDSMATS).

This sequence belongs to the type IV zinc-finger family. Class C subfamily.

It is found in the nucleus. In terms of biological role, transcriptional activator that specifically binds 5'-GATA-3' or 5'-GAT-3' motifs within gene promoters. The protein is GATA transcription factor 19 of Oryza sativa subsp. japonica (Rice).